Here is a 178-residue protein sequence, read N- to C-terminus: ATP synthase subunit delta (178 aa).

Belongs to the ATPase delta chain family. F-type ATPases have 2 components, F(1) - the catalytic core - and F(0) - the membrane proton channel. F(1) has five subunits: alpha(3), beta(3), gamma(1), delta(1), epsilon(1). F(0) has three main subunits: a(1), b(2) and c(10-14). The alpha and beta chains form an alternating ring which encloses part of the gamma chain. F(1) is attached to F(0) by a central stalk formed by the gamma and epsilon chains, while a peripheral stalk is formed by the delta and b chains.

The protein resides in the cell membrane. In terms of biological role, f(1)F(0) ATP synthase produces ATP from ADP in the presence of a proton or sodium gradient. F-type ATPases consist of two structural domains, F(1) containing the extramembraneous catalytic core and F(0) containing the membrane proton channel, linked together by a central stalk and a peripheral stalk. During catalysis, ATP synthesis in the catalytic domain of F(1) is coupled via a rotary mechanism of the central stalk subunits to proton translocation. Functionally, this protein is part of the stalk that links CF(0) to CF(1). It either transmits conformational changes from CF(0) to CF(1) or is implicated in proton conduction. The chain is ATP synthase subunit delta from Desulfitobacterium hafniense (strain DSM 10664 / DCB-2).